The primary structure comprises 883 residues: Brevican core protein (883 aa).

An N-terminal signal peptide occupies residues Met-1–Ala-22. In terms of domain architecture, Ig-like V-type spans Phe-35 to Lys-154. Cystine bridges form between Cys-56–Cys-136, Cys-178–Cys-249, Cys-202–Cys-223, Cys-276–Cys-351, and Cys-300–Cys-321. The N-linked (GlcNAc...) asparagine glycan is linked to Asn-129. 2 consecutive Link domains span residues Val-156–Ala-251 and Gly-256–Arg-353. A glycan (N-linked (GlcNAc...) asparagine) is linked at Asn-336. A disordered region spans residues Gln-389 to Thr-574. A Phosphoserine modification is found at Ser-413. The O-linked (Xyl...) (chondroitin sulfate) serine glycan is linked to Ser-413. The span at Glu-428 to Ser-440 shows a compositional bias: polar residues. Positions Ser-441–Glu-451 are enriched in acidic residues. The segment covering Glu-452–Glu-467 has biased composition (basic and acidic residues). Ser-622 carries the GPI-anchor amidated serine lipid modification. An EGF-like domain is found at Ser-622–Asp-658. 7 cysteine pairs are disulfide-bonded: Cys-626–Cys-637, Cys-631–Cys-646, Cys-648–Cys-657, Cys-692–Cys-784, Cys-760–Cys-776, Cys-791–Cys-834, and Cys-820–Cys-847. In terms of domain architecture, C-type lectin spans Asp-658 to Met-786. The 61-residue stretch at Val-789 to Pro-849 folds into the Sushi domain. A disordered region spans residues Met-859–Leu-883.

It belongs to the aggrecan/versican proteoglycan family. Interacts with TNR. Post-translationally, O-glycosylated; contains chondroitin sulfate. As to expression, brain.

The protein localises to the secreted. It localises to the extracellular space. Its subcellular location is the extracellular matrix. It is found in the membrane. In terms of biological role, may play a role in the terminally differentiating and the adult nervous system during postnatal development. Could stabilize interactions between hyaluronan (HA) and brain proteoglycans. Isoform 2 may function as a chondroitin sulfate-bearing cell surface receptor. The polypeptide is Brevican core protein (Bcan) (Rattus norvegicus (Rat)).